Consider the following 259-residue polypeptide: Imidazole glycerol phosphate synthase subunit HisF (259 aa).

Residues Asp11 and Asp130 contribute to the active site.

This sequence belongs to the HisA/HisF family. In terms of assembly, heterodimer of HisH and HisF.

The protein resides in the cytoplasm. The enzyme catalyses 5-[(5-phospho-1-deoxy-D-ribulos-1-ylimino)methylamino]-1-(5-phospho-beta-D-ribosyl)imidazole-4-carboxamide + L-glutamine = D-erythro-1-(imidazol-4-yl)glycerol 3-phosphate + 5-amino-1-(5-phospho-beta-D-ribosyl)imidazole-4-carboxamide + L-glutamate + H(+). The protein operates within amino-acid biosynthesis; L-histidine biosynthesis; L-histidine from 5-phospho-alpha-D-ribose 1-diphosphate: step 5/9. Its function is as follows. IGPS catalyzes the conversion of PRFAR and glutamine to IGP, AICAR and glutamate. The HisF subunit catalyzes the cyclization activity that produces IGP and AICAR from PRFAR using the ammonia provided by the HisH subunit. The protein is Imidazole glycerol phosphate synthase subunit HisF of Carboxydothermus hydrogenoformans (strain ATCC BAA-161 / DSM 6008 / Z-2901).